We begin with the raw amino-acid sequence, 425 residues long: MAGAESPTECQAELEPVVSLVDVLEEDEELENEACAVLGGSDSEKCSYSQGSVGRQALYACSTCTPEGEEPAGICLACSYECHGSHKLFELYTKRNFRCDCGNSKFKNLECKLFPDKSKVNSCNKYNDNFFGLYCVCKRPYPDPEDEVPDEMIQCVVCEDWFHGRHLGAIPPESGDFQEMVCQACMRRCSFLWAYAAQLAVTRISAEDDGLLPNATGMGDEDVSKPENGAPQDNGLKEDAPEHGRDSVNEVKAEQKNEPCSSSSSESDLQTVFKKENIKTEPQSSCRLQELQAKQFVKKDAATYWPLNWRSKLCTCQDCMKMYGELDVLFLTDECDTVLAYENKGKNDQATDRRDPLMDTLSSMNRVQQVELICEYNDLKTELKDYLKRFADEGTVVKREDIQQFFEEFQSKKRRRVDGLQYYCS.

The segment at 44–116 (EKCSYSQGSV…KNLECKLFPD (73 aa)) adopts a UBR-type zinc-finger fold. The segment at 132–188 (GLYCVCKRPYPDPEDEVPDEMIQCVVCEDWFHGRHLGAIPPESGDFQEMVCQACMRR) adopts a PHD-type; atypical zinc-finger fold. The tract at residues 212–269 (LPNATGMGDEDVSKPENGAPQDNGLKEDAPEHGRDSVNEVKAEQKNEPCSSSSSESDL) is disordered. Glycyl lysine isopeptide (Lys-Gly) (interchain with G-Cter in SUMO2) cross-links involve residues Lys225 and Lys252. The segment covering 235 to 257 (GLKEDAPEHGRDSVNEVKAEQKN) has biased composition (basic and acidic residues). Position 264 is a phosphoserine (Ser264). Residues Lys274 and Lys398 each participate in a glycyl lysine isopeptide (Lys-Gly) (interchain with G-Cter in SUMO2) cross-link.

As to expression, expressed in testis and sperm (at protein level).

The enzyme catalyses S-ubiquitinyl-[E2 ubiquitin-conjugating enzyme]-L-cysteine + [acceptor protein]-L-lysine = [E2 ubiquitin-conjugating enzyme]-L-cysteine + N(6)-ubiquitinyl-[acceptor protein]-L-lysine.. The protein operates within protein modification; protein ubiquitination. Functionally, E3 ubiquitin-protein ligase which is a component of the N-end rule pathway. Recognizes and binds to proteins bearing specific N-terminal residues that are destabilizing according to the N-end rule, leading to their ubiquitination and subsequent degradation. This chain is Putative E3 ubiquitin-protein ligase UBR7 (Ubr7), found in Mus musculus (Mouse).